A 536-amino-acid chain; its full sequence is Glutamate--tRNA ligase, mitochondrial (536 aa).

48–50 contacts L-glutamate; it reads RFA. Positions 53 to 61 match the 'HIGH' region motif; it reads PTGFLHLGS. An ATP-binding site is contributed by His-58. L-glutamate contacts are provided by residues Glu-84, 235 to 239, and Arg-253; that span reads YHLAN. ATP contacts are provided by residues Glu-256 and 291–295; that span reads KLSKR. The 'KMSKS' region signature appears at 291 to 295; the sequence is KLSKR.

Belongs to the class-I aminoacyl-tRNA synthetase family. Glutamate--tRNA ligase type 1 subfamily.

It localises to the mitochondrion matrix. The catalysed reaction is tRNA(Glu) + L-glutamate + ATP = L-glutamyl-tRNA(Glu) + AMP + diphosphate. Catalyzes the attachment of glutamate to tRNA(Glu) in a two-step reaction: glutamate is first activated by ATP to form Glu-AMP and then transferred to the acceptor end of tRNA(Glu). This Saccharomyces cerevisiae (strain ATCC 204508 / S288c) (Baker's yeast) protein is Glutamate--tRNA ligase, mitochondrial (MSE1).